Consider the following 660-residue polypeptide: Acetyl-coenzyme A synthetase (660 aa).

Residues 197–200 and Thr-317 contribute to the CoA site; that span reads RGGK. Residues 397 to 399, 421 to 426, Asp-512, and Arg-528 each bind ATP; these read GEP and DTFWQT. Ser-536 is a CoA binding site. Arg-539 contacts ATP. 2 residues coordinate Mg(2+): Val-550 and Val-555. At Lys-625 the chain carries N6-acetyllysine.

This sequence belongs to the ATP-dependent AMP-binding enzyme family. Requires Mg(2+) as cofactor. Acetylated. Deacetylation by the SIR2-homolog deacetylase activates the enzyme.

It catalyses the reaction acetate + ATP + CoA = acetyl-CoA + AMP + diphosphate. Its function is as follows. Catalyzes the conversion of acetate into acetyl-CoA (AcCoA), an essential intermediate at the junction of anabolic and catabolic pathways. AcsA undergoes a two-step reaction. In the first half reaction, AcsA combines acetate with ATP to form acetyl-adenylate (AcAMP) intermediate. In the second half reaction, it can then transfer the acetyl group from AcAMP to the sulfhydryl group of CoA, forming the product AcCoA. This Cupriavidus pinatubonensis (strain JMP 134 / LMG 1197) (Cupriavidus necator (strain JMP 134)) protein is Acetyl-coenzyme A synthetase.